The chain runs to 126 residues: Adenosine 5'-monophosphoramidase HINT1 (126 aa).

Alanine 2 is modified (N-acetylalanine). Residues 18 to 126 form the HIT domain; it reads IFGKIIRKEI…GGRQMHWPPG (109 aa). N6-acetyllysine occurs at positions 21 and 30. 43–44 contacts AMP; it reads DI. A phosphoserine mark is found at serine 45 and serine 72. Residues asparagine 99, 105-107, and 112-114 contribute to the AMP site; these read GQS and HLH. The short motif at 110-114 is the Histidine triad motif element; the sequence is HVHLH. Histidine 112 functions as the Tele-AMP-histidine intermediate in the catalytic mechanism.

It belongs to the HINT family. In terms of assembly, homodimer. Interacts with CDK7. Interacts with RUVBL1 and RUVBL2 and is associated with the LEF1/TCF1-CTNNB1 complex and with a KAT5 histone acetyltransferase complex. Identified in a complex with MITF and CTNNB1. Interacts with CDC34 and RBX1, and is part of a SCF (SKP2-CUL1-F-box protein) E3 ubiquitin-protein ligase complex. Interacts with SUMO1, SUMO2 and RGS17. Interacts with the Ten-1 ICD form of TENM1. Interacts with CALM1; interaction increases in the presence of calcium ions. In terms of tissue distribution, widely expressed.

It is found in the cytoplasm. It localises to the nucleus. It carries out the reaction adenosine 5'-phosphoramidate + H2O = AMP + NH4(+). Its function is as follows. Exhibits adenosine 5'-monophosphoramidase activity, hydrolyzing purine nucleotide phosphoramidates with a single phosphate group such as adenosine 5'monophosphoramidate (AMP-NH2) to yield AMP and NH2. Hydrolyzes adenosine 5'monophosphomorpholidate (AMP-morpholidate) and guanosine 5'monophosphomorpholidate (GMP-morpholidate). Hydrolyzes lysyl-AMP (AMP-N-epsilon-(N-alpha-acetyl lysine methyl ester)) generated by lysine tRNA ligase, as well as Met-AMP, His-AMP and Asp-AMP, lysyl-GMP (GMP-N-epsilon-(N-alpha-acetyl lysine methyl ester)) and AMP-N-alanine methyl ester. Hydrolyzes 3-indolepropionic acyl-adenylate, tryptamine adenosine phosphoramidate monoester and other fluorogenic purine nucleoside tryptamine phosphoramidates in vitro. Can also convert adenosine 5'-O-phosphorothioate and guanosine 5'-O-phosphorothioate to the corresponding nucleoside 5'-O-phosphates with concomitant release of hydrogen sulfide. In addition, functions as scaffolding protein that modulates transcriptional activation by the LEF1/TCF1-CTNNB1 complex and by the complex formed with MITF and CTNNB1. Modulates p53/TP53 levels and p53/TP53-mediated apoptosis. Modulates proteasomal degradation of target proteins by the SCF (SKP2-CUL1-F-box protein) E3 ubiquitin-protein ligase complex. Also exhibits SUMO-specific isopeptidase activity, deconjugating SUMO1 from RGS17. Deconjugates SUMO1 from RANGAP1. This chain is Adenosine 5'-monophosphoramidase HINT1 (HINT1), found in Homo sapiens (Human).